We begin with the raw amino-acid sequence, 525 residues long: Allantoate deiminase (525 aa).

Positions 1-53 are cleaved as a signal peptide; that stretch reads MAVPHPSSSSSRSHPFLSHVYHTSFHHHHHHNHPSLVLFWCLVFSLLSPLALS. Low complexity predominate over residues 56–75; the sequence is SSSSSSSSDSSSSSSSHISL. The tract at residues 56 to 78 is disordered; that stretch reads SSSSSSSSDSSSSSSSHISLGIG. N-linked (GlcNAc...) asparagine glycosylation occurs at Asn156. Residues His167, Asp178, Glu215, His281, and His499 each coordinate Mn(2+).

This sequence belongs to the peptidase M20A family. As to quaternary structure, homodimer. Mn(2+) is required as a cofactor. In terms of tissue distribution, expressed in seedlings, roots, stems, leaves, flowers, siliques and seeds.

The protein resides in the endoplasmic reticulum. It carries out the reaction allantoate + H2O + 2 H(+) = (S)-2-ureidoglycine + NH4(+) + CO2. Inhibited by borate, fluoride, L-Asn and L-Asp, but not by phenylphosphorodiamidate. In terms of biological role, involved in the catabolism of purine nucleotides. Can use allantoate as substrate, but not Nalpha-carbamoyl-L-Asp, Nalpha-carbamoyl-L-Ala or Nalpha-carbamoyl-Gly. The sequential activity of AAH, UGLYAH and UAH allows a complete purine breakdown without the intermediate generation of urea. Involved in the regulation of seed maturation and seed dormancy. This Arabidopsis thaliana (Mouse-ear cress) protein is Allantoate deiminase.